The primary structure comprises 144 residues: Large ribosomal subunit protein uL16c (144 aa).

Belongs to the universal ribosomal protein uL16 family. Part of the 50S ribosomal subunit.

It is found in the plastid. The protein localises to the chloroplast. This chain is Large ribosomal subunit protein uL16c, found in Chara vulgaris (Common stonewort).